The chain runs to 1449 residues: MYNPYQQQQAAYNPQQQQTGFAGGFNQQQQYVQPQQTGYYNPNQPPSLPNQATGFYQPQQQGMFNASSFQNQPTGFAQQPSIQPQQTGYVQTQPTGFQQPGTNSAPTVTENSELKIPSMRLSFITAADQSKFEHLFRTAVPKGEQAISGDSARDILLRSGLQPITLAEIWSLADTNKSGSLLFPEFALALHLCNLSLKGDPLPTMLPEKWSNEVKSFVDAISFSVPENPANILSNTPFASSGASSNPINNDWMAPQATGFNNSGAVPSTSFQAQPTGFGASQEMMAQRTGNPPLPQQATGFGSNNVAPLLPQRTGGGTLIPLQPQQTSNLIPAQKTGPLQPQTTGFQTQNPHQTGPGALQPQSTGFAQRMNNGPLQAQTTGFQQQTTGFQPQSTGFQPQSTGFQPQSTGFQPQQTGPLQAQPTGKPGQWGFVSTPTGGIPGMNAMEQHFLPSSQLPTNNLQNAMGGSLKTNVTWSITKQEKQIYDGVFSAWDSRNKGFIDGEVAINIFGKSGLARPDLESIWNLADTNNRGKLNKDEFAVAMHLVYRRLNGFDLPLRLPPELVPPSTKHIQDSMDTLKNSLKSGSAKSSPPVKPGKTDGKRYKNDDSNFGYVSNVRHRKKNVSNNDSSNGDEKPSHNSDLTIADLKKLVREKKILLDAVDAEDQDAAISNRQMESRNYQEIDSLKQQIRKIQSQLNDNVSSSGSIGERKQLMDKLNYLTRDKVPGLISKIHQVNKDIATSKVELFKLKLSKENPDWQPEDAEAGIVGTGVNGEVTDADRQKFKSKQLLKQRMAALTGKSHGSGNELDVKLHQEIKNTRSEGEIQSGMINDIEASIKDLEDGCAANLQVTNKEEVGTDKWENGNNLNEEVAKFVRELNSSKPKQQSSSQVNSTLSQGQPQTQPQSNNVEAGIVSPQVTGASDSSTASHEYRTPEERSAYIKAQAEKRMNERLAKLGLTRHMTSGSSSTIEQQTQNKTTSLYANSETSKNAERKLESQPEYQQQQQQQQQQQPPPPQRQQSQQEAQLQDKGTNGQPDSPRQVGQKPTEIMDNESDDDNEEYVALMKKKEEMEARERKRKLKKKQDKEARLEKLKREMEELKKKEEAGDSSDDEEPITEVASYGPSGSASKSSTTKSIEQPIVEEKTNEEQIAAPVVEADTFVPKTHDNNPFARIQNNSSTPGSNNGSKDNLFFKPEKEVKLDPKKAAAQRASQRGLGDFNDWSDEEENSSEDEGPNRAGAAQLASLLFGGMSQPVPKSSTVTPNQEFHDAEDIPHFDSQESKENNNGEYTSQPTSVIQEKPDAIDSTSEAQVKSIPVEVEAPSPDNFTPPPPPPPSNIPPLPNTSAPPPPPPPPPPMDTPPIPSSSAPPPPPPPPGAAPPLPNASVPPPPRGAPPLPGDSSLSSGTKQAPPSGGNVDIGALLGQIKTGSSLKKVDENEKRIADGAVVGRVL.

Low complexity-rich tracts occupy residues 1–18 (MYNP…QQQQ) and 27–36 (QQQQYVQPQQ). A disordered region spans residues 1-86 (MYNPYQQQQA…AQQPSIQPQQ (86 aa)). Residues 49-86 (PNQATGFYQPQQQGMFNASSFQNQPTGFAQQPSIQPQQ) are compositionally biased toward polar residues. Residues 128–217 (DQSKFEHLFR…EKWSNEVKSF (90 aa)) form the EH 1 domain. Positions 161 to 196 (LQPITLAEIWSLADTNKSGSLLFPEFALALHLCNLS) constitute an EF-hand 1 domain. 4 stretches are compositionally biased toward polar residues: residues 239–249 (ASSGASSNPIN), 258–275 (TGFN…QAQP), 296–306 (QQATGFGSNNV), and 323–353 (QPQQ…NPHQ). Disordered stretches follow at residues 239–366 (ASSG…STGF) and 386–427 (TTGF…GKPG). Positions 386–397 (TTGFQPQSTGFQ) are enriched in low complexity. Polar residues predominate over residues 398-422 (PQSTGFQPQSTGFQPQQTGPLQAQP). One can recognise an EH 2 domain in the interval 480–569 (EKQIYDGVFS…PELVPPSTKH (90 aa)). Positions 513–548 (LARPDLESIWNLADTNNRGKLNKDEFAVAMHLVYRR) constitute an EF-hand 2 domain. Residues 579 to 588 (NSLKSGSAKS) show a composition bias toward polar residues. Disordered stretches follow at residues 579 to 638 (NSLK…SHNS), 877 to 935 (NSSK…PEER), and 956 to 1418 (LTRH…DIGA). Over residues 595–606 (GKTDGKRYKNDD) the composition is skewed to basic and acidic residues. Positions 878–888 (SSKPKQQSSSQ) are enriched in low complexity. 3 stretches are compositionally biased toward polar residues: residues 889–907 (VNST…SNNV), 914–926 (PQVT…STAS), and 959–986 (HMTS…SETS). Composition is skewed to low complexity over residues 996–1009 (QPEY…QQQQ) and 1016–1026 (RQQSQQEAQLQ). Over residues 1027–1036 (DKGTNGQPDS) the composition is skewed to polar residues. The segment covering 1048–1058 (MDNESDDDNEE) has biased composition (acidic residues). Residues 1050–1108 (NESDDDNEEYVALMKKKEEMEARERKRKLKKKQDKEARLEKLKREMEELKKKEEAGDSS) are a coiled coil. 2 stretches are compositionally biased toward basic and acidic residues: residues 1064–1073 (KKKEEMEARE) and 1082–1104 (QDKE…KEEA). Positions 1105–1114 (GDSSDDEEPI) are enriched in acidic residues. Low complexity-rich tracts occupy residues 1118–1134 (ASYG…TTKS) and 1174–1185 (NNSSTPGSNNGS). Positions 1192–1203 (KPEKEVKLDPKK) are enriched in basic and acidic residues. The segment covering 1219–1231 (DWSDEEENSSEDE) has biased composition (acidic residues). The segment covering 1253 to 1263 (VPKSSTVTPNQ) has biased composition (polar residues). Positions 1264-1283 (EFHDAEDIPHFDSQESKENN) are enriched in basic and acidic residues. The segment covering 1284 to 1295 (NGEYTSQPTSVI) has biased composition (polar residues). Positions 1325–1395 (FTPPPPPPPS…PPPRGAPPLP (71 aa)) are enriched in pro residues. The region spanning 1415 to 1432 (DIGALLGQIKTGSSLKKV) is the WH2 domain.

The protein belongs to the PAN1 family. In terms of assembly, component of the PAN1 actin cytoskeleton-regulatory complex.

It is found in the cell membrane. The protein localises to the endosome membrane. Its subcellular location is the cytoplasm. The protein resides in the cytoskeleton. It localises to the actin patch. In terms of biological role, component of the PAN1 actin cytoskeleton-regulatory complex required for the internalization of endosomes during actin-coupled endocytosis. The complex links the site of endocytosis to the cell membrane-associated actin cytoskeleton. Mediates uptake of external molecules and vacuolar degradation of plasma membrane proteins. Plays a role in the proper organization of the cell membrane-associated actin cytoskeleton and promotes its destabilization. The sequence is that of Actin cytoskeleton-regulatory complex protein PAN1 (PAN1) from Debaryomyces hansenii (strain ATCC 36239 / CBS 767 / BCRC 21394 / JCM 1990 / NBRC 0083 / IGC 2968) (Yeast).